A 479-amino-acid polypeptide reads, in one-letter code: Glycogen synthase (479 aa).

Lysine 16 is a binding site for ADP-alpha-D-glucose.

This sequence belongs to the glycosyltransferase 1 family. Bacterial/plant glycogen synthase subfamily.

It catalyses the reaction [(1-&gt;4)-alpha-D-glucosyl](n) + ADP-alpha-D-glucose = [(1-&gt;4)-alpha-D-glucosyl](n+1) + ADP + H(+). The protein operates within glycan biosynthesis; glycogen biosynthesis. In terms of biological role, synthesizes alpha-1,4-glucan chains using ADP-glucose. The protein is Glycogen synthase of Lactiplantibacillus plantarum (strain ATCC BAA-793 / NCIMB 8826 / WCFS1) (Lactobacillus plantarum).